Reading from the N-terminus, the 570-residue chain is Putative ABC transporter ATP-binding protein MW2603 (570 aa).

2 consecutive ABC transporter domains span residues Ile-6–Glu-247 and Leu-304–Arg-537. ATP-binding positions include Gly-40–Ser-47 and Gly-338–Ser-345.

This sequence belongs to the ABC transporter superfamily.

The protein localises to the cell membrane. Its function is as follows. Probably part of an ABC transporter complex. Responsible for energy coupling to the transport system. The protein is Putative ABC transporter ATP-binding protein MW2603 of Staphylococcus aureus (strain MW2).